Reading from the N-terminus, the 318-residue chain is MLHKNKWLKQAMLASALLLANPFNLASAAVVTSIRPLGFIAAAIADGVLPTEVLLPDGASPHDYALRPSDVQRLRSAELVIWVGPEMEAFLSKPLTQVAENKQIALSQLPSVTPLLMKSDEHDEAEEGESGHHHDHAKDNPTDDHHHGEYNMHIWLSPAIAKQAAIAIHDRLLELTPQNKDKLDANLRRFEYQLAQNEKNIVTMLKPVQGKGYFVFHDAYGYFENHFGLSPLGHFTVNPEIQPGAQRLHQIRTQLVEHKAVCVFAEPQFRPAVINAVAKGTNVRSGTLDPLGSGIVLDKDSYVNFLSQLSNQYVSCLK.

The first 28 residues, 1-28 (MLHKNKWLKQAMLASALLLANPFNLASA), serve as a signal peptide directing secretion. H62 serves as a coordination point for Zn(2+). The disordered stretch occupies residues 121–146 (EHDEAEEGESGHHHDHAKDNPTDDHH). Basic and acidic residues predominate over residues 129 to 146 (ESGHHHDHAKDNPTDDHH). Residues H153, H217, and D289 each coordinate Zn(2+). Residues C262 and C316 are joined by a disulfide bond.

Belongs to the bacterial solute-binding protein 9 family.

It localises to the periplasm. Its function is as follows. Part of the ATP-binding cassette (ABC) transport system ZnuABC involved in zinc import. Binds zinc with high affinity and specificity and delivers it to the membrane permease for translocation into the cytoplasm. The sequence is that of High-affinity zinc uptake system protein ZnuA (znuA) from Yersinia pestis.